Here is a 487-residue protein sequence, read N- to C-terminus: UDP-N-acetylmuramate--L-alanine ligase (487 aa).

130 to 136 (GTHGKTT) lines the ATP pocket.

This sequence belongs to the MurCDEF family.

It localises to the cytoplasm. It carries out the reaction UDP-N-acetyl-alpha-D-muramate + L-alanine + ATP = UDP-N-acetyl-alpha-D-muramoyl-L-alanine + ADP + phosphate + H(+). It participates in cell wall biogenesis; peptidoglycan biosynthesis. Functionally, cell wall formation. The sequence is that of UDP-N-acetylmuramate--L-alanine ligase from Photobacterium profundum (strain SS9).